The primary structure comprises 126 residues: UPF0538 protein C2orf76 homolog (126 aa).

This sequence belongs to the UPF0538 family.

This chain is UPF0538 protein C2orf76 homolog, found in Danio rerio (Zebrafish).